Here is a 298-residue protein sequence, read N- to C-terminus: ADP/ATP translocase 3 (298 aa).

An N-acetylmethionine modification is found at Met-1. The Mitochondrial intermembrane segment spans residues 1 to 7; that stretch reads MTEQAIS. N-acetylthreonine; in ADP/ATP translocase 3, N-terminally processed is present on Thr-2. One copy of the Solcar 1 repeat lies at 6–98; sequence ISFAKDFLAG…FAFKDKYKQI (93 aa). The chain crosses the membrane as a helical span at residues 8-37; that stretch reads FAKDFLAGGIAAAISKTAVAPIERVKLLLQ. Topologically, residues 38-74 are mitochondrial matrix; sequence VQHASKQIAADKQYKGIVDCIVRIPKEQGVLSFWRGN. The residue at position 52 (Lys-52) is an N6,N6,N6-trimethyllysine. Residues 75-99 form a helical membrane-spanning segment; sequence LANVIRYFPTQALNFAFKDKYKQIF. Residues Arg-80 and Lys-92 each coordinate ADP. Residues 100–109 lie on the Mitochondrial intermembrane side of the membrane; that stretch reads LGGVDKHTQF. Lys-105 bears the N6-acetyllysine mark. The chain crosses the membrane as a helical span at residues 110 to 130; sequence WRYFAGNLASGGAAGATSLCF. Solcar repeat units follow at residues 111–201 and 212–297; these read RYFA…AKGM and VSWM…LKKV. Topologically, residues 131-178 are mitochondrial matrix; the sequence is VYPLDFARTRLAADVGKSATEREFKGLGDCLVKITKSDGIRGLYQGFN. The helical transmembrane segment at 179-199 threads the bilayer; that stretch reads VSVQGIIIYRAAYFGVYGTAK. Residues 200–210 are Mitochondrial intermembrane-facing; that stretch reads GMLPDPRNTHI. The chain crosses the membrane as a helical span at residues 211–231; sequence VVSWMIAQTVTAVAGVFSYPF. At 232 to 273 the chain is on the mitochondrial matrix side; the sequence is DTVRRRMMMQSGRKGADIMYKGTLDCWRKIFKDEGGKAFFKG. Position 235 (Arg-235) interacts with ADP. The important for transport activity stretch occupies residues 235 to 240; the sequence is RRRMMM. Residues 235-240 carry the Nucleotide carrier signature motif motif; it reads RRRMMM. Lys-268 is modified (N6-acetyllysine). A helical transmembrane segment spans residues 274 to 291; sequence AWSNVLRGMGGAFVLVLY. At 292–298 the chain is on the mitochondrial intermembrane side; that stretch reads DELKKVI.

This sequence belongs to the mitochondrial carrier (TC 2.A.29) family. Monomer. Found in a complex with ARL2, ARL2BP and SLC25A6/ANT3. Post-translationally, trimethylated by ANTKMT at Lys-52.

The protein resides in the mitochondrion inner membrane. Its subcellular location is the membrane. It carries out the reaction ADP(in) + ATP(out) = ADP(out) + ATP(in). The enzyme catalyses H(+)(in) = H(+)(out). With respect to regulation, the matrix-open state (m-state) is inhibited by the membrane-permeable bongkrekic acid (BKA). The cytoplasmic-open state (c-state) is inhibited by the membrane-impermeable toxic inhibitor carboxyatractyloside (CATR). Proton transporter activity is inhibited by ADP:ATP antiporter activity. Its function is as follows. ADP:ATP antiporter that mediates import of ADP into the mitochondrial matrix for ATP synthesis, and export of ATP out to fuel the cell. Cycles between the cytoplasmic-open state (c-state) and the matrix-open state (m-state): operates by the alternating access mechanism with a single substrate-binding site intermittently exposed to either the cytosolic (c-state) or matrix (m-state) side of the inner mitochondrial membrane. In addition to its ADP:ATP antiporter activity, also involved in mitochondrial uncoupling and mitochondrial permeability transition pore (mPTP) activity. Plays a role in mitochondrial uncoupling by acting as a proton transporter: proton transport uncouples the proton flows via the electron transport chain and ATP synthase to reduce the efficiency of ATP production and cause mitochondrial thermogenesis. Proton transporter activity is inhibited by ADP:ATP antiporter activity, suggesting that SLC25A6/ANT3 acts as a master regulator of mitochondrial energy output by maintaining a delicate balance between ATP production (ADP:ATP antiporter activity) and thermogenesis (proton transporter activity). Proton transporter activity requires free fatty acids as cofactor, but does not transport it. Also plays a key role in mPTP opening, a non-specific pore that enables free passage of the mitochondrial membranes to solutes of up to 1.5 kDa, and which contributes to cell death. It is however unclear if SLC25A6/ANT3 constitutes a pore-forming component of mPTP or regulates it. This is ADP/ATP translocase 3 from Sus scrofa (Pig).